The primary structure comprises 1037 residues: Glycine dehydrogenase (decarboxylating) A, mitochondrial (1037 aa).

Residues 1 to 66 (MERARRLANK…LNGFGSQVRT (66 aa)) constitute a mitochondrion transit peptide. Position 773 is an N6-(pyridoxal phosphate)lysine (lysine 773).

It belongs to the GcvP family. In terms of assembly, homodimer. The glycine cleavage system is composed of four proteins: P, T, L and H. It depends on pyridoxal 5'-phosphate as a cofactor. Expressed in leaves, stems and roots.

It is found in the mitochondrion. The enzyme catalyses N(6)-[(R)-lipoyl]-L-lysyl-[glycine-cleavage complex H protein] + glycine + H(+) = N(6)-[(R)-S(8)-aminomethyldihydrolipoyl]-L-lysyl-[glycine-cleavage complex H protein] + CO2. Functionally, the glycine cleavage system catalyzes the degradation of glycine. The P protein binds the alpha-amino group of glycine through its pyridoxal phosphate cofactor; CO(2) is released and the remaining methylamine moiety is then transferred to the lipoamide cofactor of the H protein. This Flaveria pringlei protein is Glycine dehydrogenase (decarboxylating) A, mitochondrial (GDCSPA).